We begin with the raw amino-acid sequence, 336 residues long: MSEIRTLGEFIVAKQHDFPHASGELSSLIGSIKLAAKIVNREINKAGLVDITGASGDENIQGEQQQKLDIYANDKFKAALENRDQVCGVASEEEDEAVAFNKELNKNAKYVVLMDPLDGSSNIDVNVSVGTIFSIYRRISPIGSPATEEDFLQPGNKQVAAGYIIYGSSTMLVYTTGNGVHGFTYDPSLGVFCLSHEDMKIPQDGNIYSINEGNYIRFPEGVKQYLKYCQEIKPAENRPYTSRYIGSLVADFHRNLLKGGIYLYPSTQAYPNGKLRLLYECNPMAMLIEEAGGKATSGEERILDITPTELHQRVPFFVGSINMVDKVQNFLDEWQD.

Glutamate 92, aspartate 115, leucine 117, and aspartate 118 together coordinate Mg(2+). Residues aspartate 118–serine 121, asparagine 211, tyrosine 244, tyrosine 262–tyrosine 264, and lysine 274 each bind substrate. Glutamate 280 contacts Mg(2+).

Belongs to the FBPase class 1 family. As to quaternary structure, homotetramer. The cofactor is Mg(2+).

Its subcellular location is the cytoplasm. The catalysed reaction is beta-D-fructose 1,6-bisphosphate + H2O = beta-D-fructose 6-phosphate + phosphate. It functions in the pathway carbohydrate biosynthesis; gluconeogenesis. This is Fructose-1,6-bisphosphatase class 1 from Aliivibrio salmonicida (strain LFI1238) (Vibrio salmonicida (strain LFI1238)).